A 507-amino-acid polypeptide reads, in one-letter code: Histidine ammonia-lyase (507 aa).

A cross-link (5-imidazolinone (Ala-Gly)) is located at residues Ala-141–Gly-143. 2,3-didehydroalanine (Ser) is present on Ser-142.

Belongs to the PAL/histidase family. In terms of processing, contains an active site 4-methylidene-imidazol-5-one (MIO), which is formed autocatalytically by cyclization and dehydration of residues Ala-Ser-Gly.

The protein resides in the cytoplasm. It catalyses the reaction L-histidine = trans-urocanate + NH4(+). It functions in the pathway amino-acid degradation; L-histidine degradation into L-glutamate; N-formimidoyl-L-glutamate from L-histidine: step 1/3. The polypeptide is Histidine ammonia-lyase (Natranaerobius thermophilus (strain ATCC BAA-1301 / DSM 18059 / JW/NM-WN-LF)).